The sequence spans 142 residues: MIRFILLQNRQGKTRLAKYYVPLEESEKHKVEYEVHRLVVNRDAKFTNFVEFRTHKVIYRRYAGLFFSVCVDITDNELAYLESIHLFVEILDHFFSNVCELDLVFNFHKVYLILDEFILAGELQETSKRAIIERMSELEKLQ.

This sequence belongs to the adaptor complexes small subunit family. As to quaternary structure, adaptor protein complex 2 (AP-2) is a heterotetramer composed of two large adaptins (alpha-type and beta-type subunits), a medium adaptin (mu-type subunit) and a small adaptin (sigma-type subunit).

It is found in the cell membrane. The protein resides in the membrane. It localises to the coated pit. In terms of biological role, subunit of the adaptor protein complex 2 (AP-2). Adaptor protein complexes function in protein transport via transport vesicles in different membrane traffic pathways. Adaptor protein complexes are vesicle coat components and appear to be involved in cargo selection and vesicle formation. AP-2 is involved in clathrin-dependent endocytosis in which cargo proteins are incorporated into vesicles surrounded by clathrin (clathrin-coated vesicles, CCVs) which are destined for fusion with the early endosome. The complex binds polyphosphoinositides. The sequence is that of AP-2 complex subunit sigma (AP17) from Arabidopsis thaliana (Mouse-ear cress).